The sequence spans 58 residues: Temporin-1Th (58 aa).

The signal sequence occupies residues 1-22 (MFTLKKSLLLLFFLGTINLSLC). Positions 23 to 46 (EEERNAEEERRDEPDERDVQVEKR) are excised as a propeptide. The disordered stretch occupies residues 25 to 46 (ERNAEEERRDEPDERDVQVEKR). Leu56 carries the leucine amide modification.

In terms of tissue distribution, expressed by the skin glands.

It localises to the secreted. In terms of biological role, antimicrobial peptide that renders both the outer and inner membrane of bacteria permeable to hydrophobic substances of low molecular mass. In Rana temporaria (European common frog), this protein is Temporin-1Th.